The chain runs to 299 residues: Inactive recombination-promoting nuclease-like protein RpnE (299 aa).

Belongs to the Rpn/YhgA-like nuclease family.

Upon expression has no effect on RecA-independent DNA recombination, cell viability or DNA damage. In Escherichia coli (strain K12), this protein is Inactive recombination-promoting nuclease-like protein RpnE (yfaD).